A 1203-amino-acid polypeptide reads, in one-letter code: DNA-directed RNA polymerase subunit beta' (1203 aa).

Residues Cys60, Cys62, Cys75, and Cys78 each coordinate Zn(2+). 3 residues coordinate Mg(2+): Asp449, Asp451, and Asp453. The Zn(2+) site is built by Cys818, Cys892, Cys899, and Cys902.

The protein belongs to the RNA polymerase beta' chain family. The RNAP catalytic core consists of 2 alpha, 1 beta, 1 beta' and 1 omega subunit. When a sigma factor is associated with the core the holoenzyme is formed, which can initiate transcription. The cofactor is Mg(2+). Zn(2+) is required as a cofactor.

The enzyme catalyses RNA(n) + a ribonucleoside 5'-triphosphate = RNA(n+1) + diphosphate. Functionally, DNA-dependent RNA polymerase catalyzes the transcription of DNA into RNA using the four ribonucleoside triphosphates as substrates. In Bacillus cereus (strain ATCC 10987 / NRS 248), this protein is DNA-directed RNA polymerase subunit beta'.